The chain runs to 459 residues: MDYSFLLIILLLTISTSCCAAPSSYVEEQLRDRISNLPGQPSNVDFRQYSGYVTVHEERGRALFYWLVESPLARDPKSRPLVLWLNGGPGCSSVAYGAAEEIGPFRVGSDGKTLHSKLYAWNKLANLLFLESPAGVGFSYSNTTSDLYTTGDQRTAEDSYIFLVNWFERFPQYKHREFYIVGESYAGHFVPQLSKLVHERNKGFKNPAINLKGFMVGNAVTDDYHDYIGTFEYWWNHGLISDSTYHQLKTACYSVSSQHPSMQCMVALRNAELEQGNIDPYSIFTKPCNSTVALKRFLKGRYPWMSRAYDPCTERYSNVYFNRLDVQKALHANVTRLSYPWKACSDIVGSYWDDSPLSMLPIYKELITAGLKIWVFSGDTDAVVPITATRYSVDALKLATITNWYPWYDHGKVGGWSQVYKGLTLVTVAGAGHEVPLHRPRQAFILFRSFLESKPMPMT.

The N-terminal stretch at 1–20 is a signal peptide; sequence MDYSFLLIILLLTISTSCCA. Disulfide bonds link cysteine 91–cysteine 344, cysteine 252–cysteine 264, and cysteine 288–cysteine 312. Asparagine 142 is a glycosylation site (N-linked (GlcNAc...) asparagine). Serine 184 is a catalytic residue. Asparagine 289 and asparagine 333 each carry an N-linked (GlcNAc...) asparagine glycan. Catalysis depends on residues aspartate 381 and histidine 433.

Belongs to the peptidase S10 family. Ubiquitous.

It is found in the secreted. Its function is as follows. Probable carboxypeptidase. The protein is Serine carboxypeptidase-like 27 (SCPL27) of Arabidopsis thaliana (Mouse-ear cress).